Here is a 405-residue protein sequence, read N- to C-terminus: Probable tRNA sulfurtransferase (405 aa).

Positions 60–165 constitute a THUMP domain; it reads QEVSASLKKI…PDAAYISHEE (106 aa). Residues 183 to 184, 208 to 209, Arg-265, Gly-287, and Gln-296 each bind ATP; these read ML and HF.

It belongs to the ThiI family.

The protein resides in the cytoplasm. It catalyses the reaction [ThiI sulfur-carrier protein]-S-sulfanyl-L-cysteine + a uridine in tRNA + 2 reduced [2Fe-2S]-[ferredoxin] + ATP + H(+) = [ThiI sulfur-carrier protein]-L-cysteine + a 4-thiouridine in tRNA + 2 oxidized [2Fe-2S]-[ferredoxin] + AMP + diphosphate. The catalysed reaction is [ThiS sulfur-carrier protein]-C-terminal Gly-Gly-AMP + S-sulfanyl-L-cysteinyl-[cysteine desulfurase] + AH2 = [ThiS sulfur-carrier protein]-C-terminal-Gly-aminoethanethioate + L-cysteinyl-[cysteine desulfurase] + A + AMP + 2 H(+). Its pathway is cofactor biosynthesis; thiamine diphosphate biosynthesis. Catalyzes the ATP-dependent transfer of a sulfur to tRNA to produce 4-thiouridine in position 8 of tRNAs, which functions as a near-UV photosensor. Also catalyzes the transfer of sulfur to the sulfur carrier protein ThiS, forming ThiS-thiocarboxylate. This is a step in the synthesis of thiazole, in the thiamine biosynthesis pathway. The sulfur is donated as persulfide by IscS. The protein is Probable tRNA sulfurtransferase of Streptococcus suis (strain 98HAH33).